The chain runs to 203 residues: Hypoxanthine-guanine phosphoribosyltransferase (203 aa).

Residues lysine 66 and glycine 67 each contribute to the diphosphate site. Glutamate 122 and aspartate 123 together coordinate Mg(2+). Catalysis depends on aspartate 126, which acts as the Proton acceptor. GMP is bound by residues lysine 154, phenylalanine 175 to valine 176, and aspartate 182. Arginine 188 contributes to the diphosphate binding site.

Belongs to the purine/pyrimidine phosphoribosyltransferase family. Requires Mg(2+) as cofactor.

It is found in the cytoplasm. It catalyses the reaction IMP + diphosphate = hypoxanthine + 5-phospho-alpha-D-ribose 1-diphosphate. The enzyme catalyses GMP + diphosphate = guanine + 5-phospho-alpha-D-ribose 1-diphosphate. It participates in purine metabolism; IMP biosynthesis via salvage pathway; IMP from hypoxanthine: step 1/1. It functions in the pathway purine metabolism; GMP biosynthesis via salvage pathway; GMP from guanine: step 1/1. Its function is as follows. Purine salvage pathway enzyme that catalyzes the transfer of the ribosyl-5-phosphate group from 5-phospho-alpha-D-ribose 1-diphosphate (PRPP) to the N9 position of the 6-oxopurines hypoxanthine and guanine to form the corresponding ribonucleotides IMP (inosine 5'-monophosphate) and GMP (guanosine 5'-monophosphate), with the release of PPi. This chain is Hypoxanthine-guanine phosphoribosyltransferase (hpt), found in Mycobacterium avium.